The sequence spans 238 residues: Proteasome subunit beta type-6 (238 aa).

Residue alanine 2 is modified to N-acetylalanine. A propeptide spans 2–33 (removed in mature form); the sequence is AAALAVRRAGSAPAFGPEALTPDWENREVSTG. The active-site Nucleophile is the threonine 34. Threonine 68 carries the post-translational modification Phosphothreonine.

It belongs to the peptidase T1B family. As to quaternary structure, the 26S proteasome consists of a 20S proteasome core and two 19S regulatory subunits. The 20S proteasome core is a barrel-shaped complex made of 28 subunits that are arranged in four stacked rings. The two outer rings are each formed by seven alpha subunits, and the two inner rings are formed by seven beta subunits. The proteolytic activity is exerted by three beta-subunits PSMB5, PSMB6 and PSMB7.

Its subcellular location is the cytoplasm. It localises to the nucleus. It catalyses the reaction Cleavage of peptide bonds with very broad specificity.. Its function is as follows. Component of the 20S core proteasome complex involved in the proteolytic degradation of most intracellular proteins. This complex plays numerous essential roles within the cell by associating with different regulatory particles. Associated with two 19S regulatory particles, forms the 26S proteasome and thus participates in the ATP-dependent degradation of ubiquitinated proteins. The 26S proteasome plays a key role in the maintenance of protein homeostasis by removing misfolded or damaged proteins that could impair cellular functions, and by removing proteins whose functions are no longer required. Associated with the PA200 or PA28, the 20S proteasome mediates ubiquitin-independent protein degradation. This type of proteolysis is required in several pathways including spermatogenesis (20S-PA200 complex) or generation of a subset of MHC class I-presented antigenic peptides (20S-PA28 complex). Within the 20S core complex, PSMB6 displays a peptidylglutamyl-hydrolyzing activity also termed postacidic or caspase-like activity, meaning that the peptides bond hydrolysis occurs directly after acidic residues. The protein is Proteasome subunit beta type-6 (Psmb6) of Mus musculus (Mouse).